Consider the following 360-residue polypeptide: Phospho-N-acetylmuramoyl-pentapeptide-transferase (360 aa).

The next 10 membrane-spanning stretches (helical) occupy residues 26–46 (AVLSLLTALLLSLWIGPKMIL), 73–93 (TMGGIMILATITASSLLWGDL), 94–114 (SNPYIWCSLFVLLGYGAIGFV), 132–152 (WKYFWLSVVAFIAVFTMYMIG), 168–188 (IMPQLGLFYIVLAYFVIVGTS), 199–219 (GLAIMPTVFVAGAFAIIAWAT), 239–259 (LVIFCTAIVGAGLGFLWFNTY), 263–283 (VFMGDVGSLALGGALGVIAVL), 288–308 (FLLVIMGGVFVMETVSVILQV), and 338–358 (VIIRFWIISLMLVLLGLVTLK).

It belongs to the glycosyltransferase 4 family. MraY subfamily. The cofactor is Mg(2+).

It localises to the cell inner membrane. The catalysed reaction is UDP-N-acetyl-alpha-D-muramoyl-L-alanyl-gamma-D-glutamyl-meso-2,6-diaminopimeloyl-D-alanyl-D-alanine + di-trans,octa-cis-undecaprenyl phosphate = di-trans,octa-cis-undecaprenyl diphospho-N-acetyl-alpha-D-muramoyl-L-alanyl-D-glutamyl-meso-2,6-diaminopimeloyl-D-alanyl-D-alanine + UMP. The protein operates within cell wall biogenesis; peptidoglycan biosynthesis. Its function is as follows. Catalyzes the initial step of the lipid cycle reactions in the biosynthesis of the cell wall peptidoglycan: transfers peptidoglycan precursor phospho-MurNAc-pentapeptide from UDP-MurNAc-pentapeptide onto the lipid carrier undecaprenyl phosphate, yielding undecaprenyl-pyrophosphoryl-MurNAc-pentapeptide, known as lipid I. The protein is Phospho-N-acetylmuramoyl-pentapeptide-transferase of Actinobacillus succinogenes (strain ATCC 55618 / DSM 22257 / CCUG 43843 / 130Z).